The following is a 190-amino-acid chain: Prostaglandin-H2 D-isomerase (190 aa).

Residues 1 to 22 form the signal peptide; that stretch reads MATHHTLWMGLVLLGLLGGLQA. Asparagine 51 carries an N-linked (GlcNAc...) asparagine glycan. The active-site Nucleophile is the cysteine 65. N-linked (GlcNAc...) asparagine glycosylation occurs at asparagine 78. An intrachain disulfide couples cysteine 89 to cysteine 186.

Belongs to the calycin superfamily. Lipocalin family. As to quaternary structure, monomer.

Its subcellular location is the rough endoplasmic reticulum. The protein resides in the nucleus membrane. The protein localises to the golgi apparatus. It localises to the cytoplasm. It is found in the perinuclear region. Its subcellular location is the secreted. It carries out the reaction prostaglandin H2 = prostaglandin D2. Its function is as follows. Catalyzes the conversion of PGH2 to PGD2, a prostaglandin involved in smooth muscle contraction/relaxation and a potent inhibitor of platelet aggregation. Involved in a variety of CNS functions, such as sedation, NREM sleep and PGE2-induced allodynia, and may have an anti-apoptotic role in oligodendrocytes. Binds small non-substrate lipophilic molecules, including biliverdin, bilirubin, retinal, retinoic acid and thyroid hormone, and may act as a scavenger for harmful hydrophobic molecules and as a secretory retinoid and thyroid hormone transporter. Possibly involved in development and maintenance of the blood-brain, blood-retina, blood-aqueous humor and blood-testis barrier. It is likely to play important roles in both maturation and maintenance of the central nervous system and male reproductive system. Involved in PLA2G3-dependent maturation of mast cells. PLA2G3 is secreted by immature mast cells and acts on nearby fibroblasts upstream to PTDGS to synthesize PGD2, which in turn promotes mast cell maturation and degranulation via PTGDR. This Macaca fuscata fuscata (Japanese macaque) protein is Prostaglandin-H2 D-isomerase (PTGDS).